The sequence spans 84 residues: U8-theraphotoxin-Hhn1f (84 aa).

Positions 1–21 are cleaved as a signal peptide; it reads MKVVLLVCLVWMMAMMELVSC. 5 disulfides stabilise this stretch: Cys23–Cys35, Cys29–Cys44, Cys34–Cys67, Cys54–Cys75, and Cys69–Cys81.

This sequence belongs to the AVIT (prokineticin) family. Expressed by the venom gland.

The protein localises to the secreted. This Cyriopagopus hainanus (Chinese bird spider) protein is U8-theraphotoxin-Hhn1f.